A 433-amino-acid polypeptide reads, in one-letter code: Transcobalamin-1 (433 aa).

An N-terminal signal peptide occupies residues M1–C23. A globular N-terminal alpha domain region spans residues E24 to S310. 3 cysteine pairs are disulfide-bonded: C26–C265, C105–C308, and C155–C197. T142–Q146 is a cyanocob(III)alamin binding site. N-linked (GlcNAc...) asparagine glycosylation occurs at N160. D186 contacts cyanocob(III)alamin. An N-linked (GlcNAc...) asparagine glycan is attached at N216. N240 and Q289 together coordinate cyanocob(III)alamin. The flexible linker stretch occupies residues A311–S332. 6 N-linked (GlcNAc...) asparagine glycosylation sites follow: N316, N337, N343, N349, N354, and N369. The interval Y333–Y433 is globular C-terminal beta domain. Position 385 to 386 (Y385 to I386) interacts with cyanocob(III)alamin. C388 and C393 are disulfide-bonded. Residues W402–L404, L411, and Y433 each bind cyanocob(III)alamin.

This sequence belongs to the eukaryotic cobalamin transport proteins family. Post-translationally, contains about 30% carbohydrates. In terms of tissue distribution, produced by the salivary glands of the oral cavity, in response to ingestion of food. Major constituent of secondary granules in neutrophils.

Its subcellular location is the secreted. Binds vitamin B12 with femtomolar affinity and protects it from the acidic environment of the stomach. The chain is Transcobalamin-1 (TCN1) from Homo sapiens (Human).